Here is a 218-residue protein sequence, read N- to C-terminus: Probable transaldolase (218 aa).

Lys-87 (schiff-base intermediate with substrate) is an active-site residue.

It belongs to the transaldolase family. Type 3B subfamily.

The protein resides in the cytoplasm. It catalyses the reaction D-sedoheptulose 7-phosphate + D-glyceraldehyde 3-phosphate = D-erythrose 4-phosphate + beta-D-fructose 6-phosphate. The protein operates within carbohydrate degradation; pentose phosphate pathway; D-glyceraldehyde 3-phosphate and beta-D-fructose 6-phosphate from D-ribose 5-phosphate and D-xylulose 5-phosphate (non-oxidative stage): step 2/3. Transaldolase is important for the balance of metabolites in the pentose-phosphate pathway. In Cytophaga hutchinsonii (strain ATCC 33406 / DSM 1761 / CIP 103989 / NBRC 15051 / NCIMB 9469 / D465), this protein is Probable transaldolase.